Here is a 200-residue protein sequence, read N- to C-terminus: A-type ATP synthase subunit E (200 aa).

This sequence belongs to the V-ATPase E subunit family. Has multiple subunits with at least A(3), B(3), C, D, E, F, H, I and proteolipid K(x).

The protein localises to the cell membrane. Its function is as follows. Component of the A-type ATP synthase that produces ATP from ADP in the presence of a proton gradient across the membrane. This chain is A-type ATP synthase subunit E, found in Aeropyrum pernix (strain ATCC 700893 / DSM 11879 / JCM 9820 / NBRC 100138 / K1).